The following is a 172-amino-acid chain: 3-hydroxydecanoyl-[acyl-carrier-protein] dehydratase (172 aa).

Histidine 71 is an active-site residue.

It belongs to the thioester dehydratase family. FabA subfamily. In terms of assembly, homodimer.

The protein resides in the cytoplasm. It carries out the reaction a (3R)-hydroxyacyl-[ACP] = a (2E)-enoyl-[ACP] + H2O. The enzyme catalyses (3R)-hydroxydecanoyl-[ACP] = (2E)-decenoyl-[ACP] + H2O. The catalysed reaction is (2E)-decenoyl-[ACP] = (3Z)-decenoyl-[ACP]. Its pathway is lipid metabolism; fatty acid biosynthesis. Necessary for the introduction of cis unsaturation into fatty acids. Catalyzes the dehydration of (3R)-3-hydroxydecanoyl-ACP to E-(2)-decenoyl-ACP and then its isomerization to Z-(3)-decenoyl-ACP. Can catalyze the dehydratase reaction for beta-hydroxyacyl-ACPs with saturated chain lengths up to 16:0, being most active on intermediate chain length. This Photorhabdus laumondii subsp. laumondii (strain DSM 15139 / CIP 105565 / TT01) (Photorhabdus luminescens subsp. laumondii) protein is 3-hydroxydecanoyl-[acyl-carrier-protein] dehydratase.